Here is a 303-residue protein sequence, read N- to C-terminus: MWPLAAALLLGSCCCGSAQLLLSKVKSVEFTSCNDTVVIPCKVLNVEAQSTDEMFVKWKLNKSYIFIYDGNKNSTTREQNFTSAKISVSDLLKGIASLTMDTHEAVVGNYTCEVTELSREGKTVIELKNRPVSWFSTNEKILIVIFPILAILLFWGKFGILTLKYKSSHTNKRIILLLVAGLALTLIVVVGAILFIPGEKPVKNASGLGLIVISTGILILLQYNVFMTAFGMTSFTIAILITQVLGYVLAVVGMCLCIMACEPVHGPLLISGLGIIALAELLGLVYMKFVASNQRTIQPPRNN.

An N-terminal signal peptide occupies residues 1-18; the sequence is MWPLAAALLLGSCCCGSA. Position 19 is a pyrrolidone carboxylic acid (Gln-19). An Ig-like V-type domain is found at 19–125; it reads QLLLSKVKSV…ELSREGKTVI (107 aa). Residues 19-140 lie on the Extracellular side of the membrane; that stretch reads QLLLSKVKSV…PVSWFSTNEK (122 aa). Cystine bridges form between Cys-33–Cys-261 and Cys-41–Cys-112. Residues Asn-34, Asn-61, Asn-73, and Asn-80 are each glycosylated (N-linked (GlcNAc...) asparagine). Phosphoserine is present on residues Ser-87 and Ser-89. Asn-109 carries N-linked (GlcNAc...) asparagine glycosylation. Residues 141–161 traverse the membrane as a helical segment; the sequence is ILIVIFPILAILLFWGKFGIL. The Cytoplasmic portion of the chain corresponds to 162–173; that stretch reads TLKYKSSHTNKR. Residues 174-194 traverse the membrane as a helical segment; the sequence is IILLLVAGLALTLIVVVGAIL. Residues 195 to 206 lie on the Extracellular side of the membrane; sequence FIPGEKPVKNAS. A glycan (N-linked (GlcNAc...) asparagine) is linked at Asn-204. The helical transmembrane segment at 207–227 threads the bilayer; sequence GLGLIVISTGILILLQYNVFM. Residues 228 to 238 are Cytoplasmic-facing; that stretch reads TAFGMTSFTIA. Residues 239 to 259 traverse the membrane as a helical segment; it reads ILITQVLGYVLAVVGMCLCIM. Over 260-266 the chain is Extracellular; the sequence is ACEPVHG. The helical transmembrane segment at 267–287 threads the bilayer; the sequence is PLLISGLGIIALAELLGLVYM. At 288-303 the chain is on the cytoplasmic side; that stretch reads KFVASNQRTIQPPRNN.

Monomer. Interacts with THBS1 (via the C-terminal domain). Interacts with SIRPA. Interacts with FAS/CD95; interaction may be enhanced by functional activation. Interacts with SIRPG, UBQLN1 and UBQLN2. May interact with fibrinogen. Expressed in hippocampus.

It localises to the cell membrane. Functionally, adhesive protein that mediates cell-to-cell interactions. Acts as a receptor for thrombospondin THBS1 and as modulator of integrin signaling through the activation of heterotrimeric G proteins. Involved in signal transduction, cardiovascular homeostasis, inflammation, apoptosis, angiogenesis, cellular self-renewal, and immunoregulation. Plays a role in modulating pulmonary endothelin EDN1 signaling. Modulates nitrous oxide (NO) signaling, in response to THBS1, hence playing a role as a pressor agent, supporting blood pressure. Plays an important role in memory formation and synaptic plasticity in the hippocampus. Receptor for SIRPA, binding to which prevents maturation of immature dendritic cells and inhibits cytokine production by mature dendritic cells. Interaction with SIRPG mediates cell-cell adhesion, enhances superantigen-dependent T-cell-mediated proliferation and costimulates T-cell activation. Positively modulates FAS-dependent apoptosis in T-cells, perhaps by enhancing FAS clustering. Plays a role in suppressing angiogenesis and may be involved in metabolic dysregulation during normal aging. In response to THBS1, negatively modulates wound healing. Inhibits stem cell self-renewal, in response to THBS1, probably by regulation of the stem cell transcription factors POU5F1/OCT4, SOX2, MYC/c-Myc and KLF4. May play a role in membrane transport and/or integrin dependent signal transduction. May prevent premature elimination of red blood cells. The sequence is that of Leukocyte surface antigen CD47 (Cd47) from Rattus norvegicus (Rat).